Reading from the N-terminus, the 121-residue chain is Chromosome transmission fidelity protein 8 homolog (121 aa).

This sequence belongs to the CTF8 family. In terms of assembly, component of the CTF18-RFC complex, which consists of CTF18, CTF8, DSCC1, RFC2, RFC3, RFC4 and RFC5. The CTF18-RFC complex does not interact with the Rad9/Rad1/Hus1 complex. The CTF18-RFC complex interacts with POLH. CTF18/CTF8/DSCC1 associate with PCNA. CTF8 exists as a dimer with DSCC1.

Its subcellular location is the nucleus. Functionally, chromosome cohesion factor involved in sister chromatid cohesion and fidelity of chromosome transmission. Component of one of the cell nuclear antigen loader complexes, CTF18-replication factor C (CTF18-RFC), which consists of CTF18, CTF8, DSCC1, RFC2, RFC3, RFC4 and RFC5. The CTF18-RFC complex binds to single-stranded and primed DNAs and has weak ATPase activity that is stimulated the presence of primed DNA, replication protein A (RPA) and proliferating cell nuclear antigen (PCNA). The CTF18-RFC complex catalyzes the ATP-dependent loading of PCNA onto primed and gapped DNA. It also interacts with and stimulates POLH, which is suggestive of a protein network that coordinates DNA repair, recombination and chromosome cohesion reactions with replication fork progression. The polypeptide is Chromosome transmission fidelity protein 8 homolog (Rattus norvegicus (Rat)).